We begin with the raw amino-acid sequence, 920 residues long: Isoleucine--tRNA ligase (920 aa).

The 'HIGH' region signature appears at 57–67; the sequence is PYANGDIHLGH. An L-isoleucyl-5'-AMP-binding site is contributed by E560. The 'KMSKS' region signature appears at 601–605; sequence KMSKS. K604 is a binding site for ATP. Zn(2+)-binding residues include C890, C893, C910, and C913.

It belongs to the class-I aminoacyl-tRNA synthetase family. IleS type 1 subfamily. Monomer. Zn(2+) is required as a cofactor.

It localises to the cytoplasm. It carries out the reaction tRNA(Ile) + L-isoleucine + ATP = L-isoleucyl-tRNA(Ile) + AMP + diphosphate. Functionally, catalyzes the attachment of isoleucine to tRNA(Ile). As IleRS can inadvertently accommodate and process structurally similar amino acids such as valine, to avoid such errors it has two additional distinct tRNA(Ile)-dependent editing activities. One activity is designated as 'pretransfer' editing and involves the hydrolysis of activated Val-AMP. The other activity is designated 'posttransfer' editing and involves deacylation of mischarged Val-tRNA(Ile). The polypeptide is Isoleucine--tRNA ligase (Caldicellulosiruptor bescii (strain ATCC BAA-1888 / DSM 6725 / KCTC 15123 / Z-1320) (Anaerocellum thermophilum)).